Here is a 110-residue protein sequence, read N- to C-terminus: Insulin-1 (110 aa).

Positions 1–24 (MALWMRFLPLLALLVLWEPKPAQA) are cleaved as a signal peptide. 3 disulfide bridges follow: Cys-31-Cys-96, Cys-43-Cys-109, and Cys-95-Cys-100. Residues 57 to 87 (EVEDPQVPQLELGGGPEAGDLQTLALEVARQ) constitute a propeptide, c peptide.

Belongs to the insulin family. As to quaternary structure, heterodimer of a B chain and an A chain linked by two disulfide bonds.

The protein localises to the secreted. Its function is as follows. Insulin decreases blood glucose concentration. It increases cell permeability to monosaccharides, amino acids and fatty acids. It accelerates glycolysis, the pentose phosphate cycle, and glycogen synthesis in liver. The sequence is that of Insulin-1 (Ins1) from Rattus norvegicus (Rat).